A 377-amino-acid chain; its full sequence is Glutamate 5-kinase (377 aa).

Residue K21 participates in ATP binding. Positions 61, 149, and 161 each coordinate substrate. ATP is bound by residues 181 to 182 (SD) and 223 to 229 (SGGMTSK). Positions 286–363 (RGSVQVDAGA…REHEELLGYA (78 aa)) constitute a PUA domain.

This sequence belongs to the glutamate 5-kinase family.

It localises to the cytoplasm. It carries out the reaction L-glutamate + ATP = L-glutamyl 5-phosphate + ADP. The protein operates within amino-acid biosynthesis; L-proline biosynthesis; L-glutamate 5-semialdehyde from L-glutamate: step 1/2. Functionally, catalyzes the transfer of a phosphate group to glutamate to form L-glutamate 5-phosphate. This Novosphingobium aromaticivorans (strain ATCC 700278 / DSM 12444 / CCUG 56034 / CIP 105152 / NBRC 16084 / F199) protein is Glutamate 5-kinase.